We begin with the raw amino-acid sequence, 424 residues long: MIDLKLLRDNPQEFSDRLAKRGKFDLQPILDLDRQQRELEVERSQLQARSNAIAKQIGEKMKSGNKSDPALEGLRAEAGQIKTTLAELEPKEKQLKDELEQQLLLIPNLPSDSTPVGKDEAENVEVRRWGEEYIPKSKDILPHWEMGEKLGILNFERSVKIAQSRFATLIGAGAALERALIQFMLDRHTSAGYLEVLPPFLINSTSLTATGQLPKFAEESFKCEADDLWLAPTAEVPVTNLYRDEILTAENLPIYHCAYTPCFRREAGSYGRDTRGLIRLHQFNKVELVKLVHPSTSEQEHEALVRDASAILEALQLPYRVIELCTGDLGFSAAKCYDLEVWLPSAGCYREISSCSNFYDFQARRGKIRFKESGQKGTQFVHTLNGSGLAVGRTMAAILENYQQPDGSVRIPPVLQPYLGRETL.

Position 233–235 (233–235 (TAE)) interacts with L-serine. Residue 264 to 266 (RRE) participates in ATP binding. Residue Glu287 participates in L-serine binding. 351 to 354 (EISS) lines the ATP pocket. An L-serine-binding site is contributed by Ser387.

It belongs to the class-II aminoacyl-tRNA synthetase family. Type-1 seryl-tRNA synthetase subfamily. As to quaternary structure, homodimer. The tRNA molecule binds across the dimer.

It localises to the cytoplasm. The catalysed reaction is tRNA(Ser) + L-serine + ATP = L-seryl-tRNA(Ser) + AMP + diphosphate + H(+). It carries out the reaction tRNA(Sec) + L-serine + ATP = L-seryl-tRNA(Sec) + AMP + diphosphate + H(+). It functions in the pathway aminoacyl-tRNA biosynthesis; selenocysteinyl-tRNA(Sec) biosynthesis; L-seryl-tRNA(Sec) from L-serine and tRNA(Sec): step 1/1. Functionally, catalyzes the attachment of serine to tRNA(Ser). Is also able to aminoacylate tRNA(Sec) with serine, to form the misacylated tRNA L-seryl-tRNA(Sec), which will be further converted into selenocysteinyl-tRNA(Sec). The protein is Serine--tRNA ligase of Cyanothece sp. (strain PCC 7425 / ATCC 29141).